Consider the following 240-residue polypeptide: Uridylate kinase (240 aa).

12–15 (KLSG) contributes to the ATP binding site. Positions 20–25 (GKQGFG) are involved in allosteric activation by GTP. UMP is bound at residue Gly54. ATP is bound by residues Gly55 and Arg59. UMP is bound by residues Asp74 and 135-142 (TGNPYFST). Asn163, Tyr169, and Asp172 together coordinate ATP.

The protein belongs to the UMP kinase family. In terms of assembly, homohexamer.

Its subcellular location is the cytoplasm. The catalysed reaction is UMP + ATP = UDP + ADP. The protein operates within pyrimidine metabolism; CTP biosynthesis via de novo pathway; UDP from UMP (UMPK route): step 1/1. Its activity is regulated as follows. Allosterically activated by GTP. Inhibited by UTP. Catalyzes the reversible phosphorylation of UMP to UDP. The polypeptide is Uridylate kinase (Geobacillus kaustophilus (strain HTA426)).